The primary structure comprises 302 residues: MIIYKKNVNYLLIDGTSYLYRAYYAFLKFKNNFNKPCGAIYGMLNMLRSMLLKYPYSNIVVIFDSPQKTFRNELFIPYKKNRPKMPNDLKEQILPIHHIIKHIGIPIISIPHVEADDIIGTLATKLYKKKYFILISTNDKDLAQLVNIHIHVLIGTSNIVLDESKVKKKYGIIPKLIPDLLGLMGDNSDNIPGVPTVGKKTALILLKTFGSLENIYNNIEKIPKCLIKKAKTIYNNLHTYKKLAFLSQKLATIKTDINVNITTKKIKMLPPCTTEISNFFLHYKFYNWNKLLKQGLWLKNCK.

The 97-residue stretch at 173–269 (IPKLIPDLLG…NITTKKIKML (97 aa)) folds into the 5'-3' exonuclease domain.

5'-3' exonuclease acting preferentially on double-stranded DNA. The sequence is that of 5'-3' exonuclease (pol) from Buchnera aphidicola subsp. Baizongia pistaciae (strain Bp).